The following is a 268-amino-acid chain: Tryptophan synthase alpha chain (268 aa).

Active-site proton acceptor residues include Glu49 and Asp60.

It belongs to the TrpA family. Tetramer of two alpha and two beta chains.

It carries out the reaction (1S,2R)-1-C-(indol-3-yl)glycerol 3-phosphate + L-serine = D-glyceraldehyde 3-phosphate + L-tryptophan + H2O. Its pathway is amino-acid biosynthesis; L-tryptophan biosynthesis; L-tryptophan from chorismate: step 5/5. Its function is as follows. The alpha subunit is responsible for the aldol cleavage of indoleglycerol phosphate to indole and glyceraldehyde 3-phosphate. The protein is Tryptophan synthase alpha chain of Shigella sonnei (strain Ss046).